Reading from the N-terminus, the 139-residue chain is Small ribosomal subunit protein uS12 (139 aa).

Disordered stretches follow at residues 1 to 22 and 37 to 57; these read MPTI…SKSP and KTPS…TPKK. The span at 9–19 shows a compositional bias: basic residues; sequence RKGRKSHKGKS. At Asp-102 the chain carries 3-methylthioaspartic acid.

It belongs to the universal ribosomal protein uS12 family. As to quaternary structure, part of the 30S ribosomal subunit. Contacts proteins S8 and S17. May interact with IF1 in the 30S initiation complex.

In terms of biological role, with S4 and S5 plays an important role in translational accuracy. Interacts with and stabilizes bases of the 16S rRNA that are involved in tRNA selection in the A site and with the mRNA backbone. Located at the interface of the 30S and 50S subunits, it traverses the body of the 30S subunit contacting proteins on the other side and probably holding the rRNA structure together. The combined cluster of proteins S8, S12 and S17 appears to hold together the shoulder and platform of the 30S subunit. The sequence is that of Small ribosomal subunit protein uS12 from Limosilactobacillus reuteri (strain DSM 20016) (Lactobacillus reuteri).